The following is a 257-amino-acid chain: Sulfur carrier protein FdhD (257 aa).

Cys-105 (cysteine persulfide intermediate) is an active-site residue.

The protein belongs to the FdhD family.

Its subcellular location is the cytoplasm. In terms of biological role, required for formate dehydrogenase (FDH) activity. Acts as a sulfur carrier protein that transfers sulfur from IscS to the molybdenum cofactor prior to its insertion into FDH. The chain is Sulfur carrier protein FdhD from Saccharolobus solfataricus (strain ATCC 35092 / DSM 1617 / JCM 11322 / P2) (Sulfolobus solfataricus).